Consider the following 92-residue polypeptide: Putative pterin-4-alpha-carbinolamine dehydratase (92 aa).

The protein belongs to the pterin-4-alpha-carbinolamine dehydratase family.

It catalyses the reaction (4aS,6R)-4a-hydroxy-L-erythro-5,6,7,8-tetrahydrobiopterin = (6R)-L-erythro-6,7-dihydrobiopterin + H2O. This chain is Putative pterin-4-alpha-carbinolamine dehydratase, found in Haloarcula marismortui (strain ATCC 43049 / DSM 3752 / JCM 8966 / VKM B-1809) (Halobacterium marismortui).